The sequence spans 348 residues: Mitochondrial glycine transporter (348 aa).

3 Solcar repeats span residues 10 to 94 (TKST…IREN), 130 to 214 (LSNT…SKQH), and 249 to 333 (RAAS…LIRR). 6 consecutive transmembrane segments (helical) span residues 16 to 41 (FVAG…TRVQ), 69 to 95 (GTLP…RENA), 136 to 161 (LLAG…VRYE), 189 to 212 (GFGA…EKSK), 253 to 279 (INFA…KTRI), and 308 to 326 (GLAL…AWTV).

This sequence belongs to the mitochondrial carrier (TC 2.A.29) family. SLC25A38 subfamily.

It localises to the mitochondrion inner membrane. The enzyme catalyses glycine(in) = glycine(out). In terms of biological role, mitochondrial glycine transporter that imports glycine into the mitochondrial matrix. Plays an important role in providing glycine for the first enzymatic step in heme biosynthesis, the condensation of glycine with succinyl-CoA to produce 5-aminolevulinate (ALA) in the mitochondrial matrix. This chain is Mitochondrial glycine transporter (mic-13), found in Neurospora crassa (strain ATCC 24698 / 74-OR23-1A / CBS 708.71 / DSM 1257 / FGSC 987).